The chain runs to 180 residues: DNA-directed RNA polymerase subunit Rpo7 (180 aa).

One can recognise an S1 motif domain in the interval 82 to 165 (QEVVEGEVLQ…RLPRIALTMR (84 aa)).

This sequence belongs to the eukaryotic RPB7/RPC8 RNA polymerase subunit family. Part of the 13-subunit RNA polymerase complex. Forms a stalk with Rpo4 that extends from the main structure.

The protein localises to the cytoplasm. The catalysed reaction is RNA(n) + a ribonucleoside 5'-triphosphate = RNA(n+1) + diphosphate. Its function is as follows. DNA-dependent RNA polymerase (RNAP) catalyzes the transcription of DNA into RNA using the four ribonucleoside triphosphates as substrates. This Saccharolobus solfataricus (strain ATCC 35092 / DSM 1617 / JCM 11322 / P2) (Sulfolobus solfataricus) protein is DNA-directed RNA polymerase subunit Rpo7.